Consider the following 396-residue polypeptide: 3-amino-4-hydroxybenzoate 2-monooxygenase PtnB3 (396 aa).

FAD contacts are provided by residues Ala19, 38–39 (EQ), and Arg112. The Proton acceptor role is filled by Tyr217. Asp295 is an FAD binding site.

Belongs to the 6-hydroxynicotinate 3-monooxygenase family. Requires FAD as cofactor.

It carries out the reaction 3-amino-4-hydroxybenzoate + NADPH + O2 + H(+) = 3-amino-2,4-dihydroxybenzoate + NADP(+) + H2O. Its pathway is antibiotic biosynthesis. In terms of biological role, part of a gene cluster involved in the biosynthesis of thioplatencin (ThioPTN) and platencin (PTN), potent and selective inhibitors of bacterial and mammalian fatty acid synthases. Catalyzes the hydroxylation of 3-amino-4-hydroxybenzoate (3,4-AHBA) to 3-amino-2,4-dihydroxybenzoate (3,2,4-ADHBA). The chain is 3-amino-4-hydroxybenzoate 2-monooxygenase PtnB3 from Streptomyces platensis.